Here is a 440-residue protein sequence, read N- to C-terminus: 23S rRNA (uracil(1939)-C(5))-methyltransferase RlmD (440 aa).

In terms of domain architecture, TRAM spans 10–68 (KALPTQAVEITIDNLDHHLTGVGRYQGKACFVEGVLPGEKVSVQITEQKKQYAHARLRQ). Residues C81, C87, C90, and C169 each coordinate [4Fe-4S] cluster. Q272, F301, N306, E322, D349, and D372 together coordinate S-adenosyl-L-methionine. The Nucleophile role is filled by C398.

It belongs to the class I-like SAM-binding methyltransferase superfamily. RNA M5U methyltransferase family. RlmD subfamily.

The catalysed reaction is uridine(1939) in 23S rRNA + S-adenosyl-L-methionine = 5-methyluridine(1939) in 23S rRNA + S-adenosyl-L-homocysteine + H(+). Catalyzes the formation of 5-methyl-uridine at position 1939 (m5U1939) in 23S rRNA. The sequence is that of 23S rRNA (uracil(1939)-C(5))-methyltransferase RlmD from Tolumonas auensis (strain DSM 9187 / NBRC 110442 / TA 4).